Reading from the N-terminus, the 423-residue chain is Histidine--tRNA ligase (423 aa).

This sequence belongs to the class-II aminoacyl-tRNA synthetase family. Homodimer.

The protein resides in the cytoplasm. It carries out the reaction tRNA(His) + L-histidine + ATP = L-histidyl-tRNA(His) + AMP + diphosphate + H(+). This chain is Histidine--tRNA ligase, found in Geobacillus sp. (strain WCH70).